The sequence spans 31 residues: Protamine CIII (31 aa).

Positions 1–31 (MPRRRRASRPVRRRRRPRVSRRRRRGGRRRR) are disordered.

In terms of tissue distribution, testis.

It is found in the nucleus. The protein localises to the chromosome. Protamines substitute for histones in the chromatin of sperm during the haploid phase of spermatogenesis. They compact sperm DNA into a highly condensed, stable and inactive complex. In Oncorhynchus mykiss (Rainbow trout), this protein is Protamine CIII.